A 180-amino-acid chain; its full sequence is Crossover junction endodeoxyribonuclease RuvC (180 aa).

Active-site residues include Asp7, Glu66, and Asp138. Mg(2+) is bound by residues Asp7, Glu66, and Asp138.

This sequence belongs to the RuvC family. In terms of assembly, homodimer which binds Holliday junction (HJ) DNA. The HJ becomes 2-fold symmetrical on binding to RuvC with unstacked arms; it has a different conformation from HJ DNA in complex with RuvA. In the full resolvosome a probable DNA-RuvA(4)-RuvB(12)-RuvC(2) complex forms which resolves the HJ. Requires Mg(2+) as cofactor.

It localises to the cytoplasm. The catalysed reaction is Endonucleolytic cleavage at a junction such as a reciprocal single-stranded crossover between two homologous DNA duplexes (Holliday junction).. The RuvA-RuvB-RuvC complex processes Holliday junction (HJ) DNA during genetic recombination and DNA repair. Endonuclease that resolves HJ intermediates. Cleaves cruciform DNA by making single-stranded nicks across the HJ at symmetrical positions within the homologous arms, yielding a 5'-phosphate and a 3'-hydroxyl group; requires a central core of homology in the junction. The consensus cleavage sequence is 5'-(A/T)TT(C/G)-3'. Cleavage occurs on the 3'-side of the TT dinucleotide at the point of strand exchange. HJ branch migration catalyzed by RuvA-RuvB allows RuvC to scan DNA until it finds its consensus sequence, where it cleaves and resolves the cruciform DNA. The protein is Crossover junction endodeoxyribonuclease RuvC of Burkholderia vietnamiensis (strain G4 / LMG 22486) (Burkholderia cepacia (strain R1808)).